A 501-amino-acid chain; its full sequence is Cytochrome P450 2J6 (501 aa).

Cys447 lines the heme pocket.

The protein belongs to the cytochrome P450 family. It depends on heme as a cofactor.

Its subcellular location is the endoplasmic reticulum membrane. It is found in the microsome membrane. The enzyme catalyses an organic molecule + reduced [NADPH--hemoprotein reductase] + O2 = an alcohol + oxidized [NADPH--hemoprotein reductase] + H2O + H(+). The protein is Cytochrome P450 2J6 (Cyp2j6) of Mus musculus (Mouse).